A 564-amino-acid polypeptide reads, in one-letter code: Potassium-transporting ATPase potassium-binding subunit (564 aa).

10 helical membrane passes run 4–24 (HEILLILAFFALVLVPAPFLG), 67–87 (TLALLAFNLAGLVLLFSILML), 135–155 (VGLTVQNFVSAAVGLCVLVAL), 179–199 (LYVLLPLCLLLALLLVWQGVP), 258–278 (FEVASIILIPAALVFTFGHYV), 286–306 (AILGCMLLLFCLGLGLSLWAE), 376–396 (IFGGVGAGLYGMLLFVLIAVF), 420–440 (LLVFTLLVMPVGVLVLGAIAA), 487–507 (LMIGLAMLIGRFGYILPILAI), and 528–548 (GPLFVSLLTVTILLVGGLTFL).

This sequence belongs to the KdpA family. The system is composed of three essential subunits: KdpA, KdpB and KdpC.

Its subcellular location is the cell inner membrane. Functionally, part of the high-affinity ATP-driven potassium transport (or Kdp) system, which catalyzes the hydrolysis of ATP coupled with the electrogenic transport of potassium into the cytoplasm. This subunit binds the periplasmic potassium ions and delivers the ions to the membrane domain of KdpB through an intramembrane tunnel. In Pseudomonas aeruginosa (strain ATCC 15692 / DSM 22644 / CIP 104116 / JCM 14847 / LMG 12228 / 1C / PRS 101 / PAO1), this protein is Potassium-transporting ATPase potassium-binding subunit.